Here is a 140-residue protein sequence, read N- to C-terminus: Nucleoside diphosphate kinase (140 aa).

ATP is bound by residues K11, F59, R87, T93, R104, and N114. The active-site Pros-phosphohistidine intermediate is H117.

It belongs to the NDK family. As to quaternary structure, homotetramer. Mg(2+) serves as cofactor.

The protein localises to the cytoplasm. The catalysed reaction is a 2'-deoxyribonucleoside 5'-diphosphate + ATP = a 2'-deoxyribonucleoside 5'-triphosphate + ADP. It carries out the reaction a ribonucleoside 5'-diphosphate + ATP = a ribonucleoside 5'-triphosphate + ADP. Functionally, major role in the synthesis of nucleoside triphosphates other than ATP. The ATP gamma phosphate is transferred to the NDP beta phosphate via a ping-pong mechanism, using a phosphorylated active-site intermediate. In Rickettsia akari (strain Hartford), this protein is Nucleoside diphosphate kinase.